The sequence spans 691 residues: Beta-galactosidase III (691 aa).

Substrate-binding residues include Arg121 and Asn159. Glu160 (proton donor) is an active-site residue. Glu318 serves as the catalytic Nucleophile. Substrate is bound by residues Trp326 and 366–369 (EKWH).

The protein belongs to the glycosyl hydrolase 42 family.

The enzyme catalyses Hydrolysis of terminal non-reducing beta-D-galactose residues in beta-D-galactosides.. In terms of biological role, specific for beta-D-anomer-linked galactoside substrates. Hydrolyzes o-nitrophenyl-beta-D-galactopyranoside (ONPG), chromogen 5-bromo-4-chloro-3-indolyl-beta-D-galactopyranoside (X-gal) and to a lesser extent lactose. Hydrolyzes p-nitrophenyl-beta-D-galacturonide very slightly. Does not hydrolyze maltose, sucrose, raffinose or melibiose. Has some transgalactosylation activity yielding galacto-oligosaccharides (GaOS), including O-beta-D-galactopyranosyl-(1,3)-O-beta-D-galactopyranosyl-(1-4)-D-glucopyranose. This Bifidobacterium longum subsp. infantis protein is Beta-galactosidase III.